Reading from the N-terminus, the 572-residue chain is Receptor-transporting protein 5 (572 aa).

Residues 52–148 form a 3CxxC-type zinc finger; that stretch reads SRLQCGHCPG…AYEGCCEACE (97 aa). Residues 544–560 form a helical membrane-spanning segment; it reads FWIWVSMTVCVFWLMCM.

The protein localises to the membrane. The chain is Receptor-transporting protein 5 (RTP5) from Homo sapiens (Human).